A 201-amino-acid polypeptide reads, in one-letter code: Glycerol-3-phosphate acyltransferase (201 aa).

The next 5 helical transmembrane spans lie at 5–25, 55–75, 88–108, 118–138, and 164–184; these read LLGA…FGVV, KMGV…ILLA, WSTA…WLGF, LGIF…GYAV, and TYGV…LIFL.

This sequence belongs to the PlsY family. Probably interacts with PlsX.

It is found in the cell inner membrane. It carries out the reaction an acyl phosphate + sn-glycerol 3-phosphate = a 1-acyl-sn-glycero-3-phosphate + phosphate. The protein operates within lipid metabolism; phospholipid metabolism. Catalyzes the transfer of an acyl group from acyl-phosphate (acyl-PO(4)) to glycerol-3-phosphate (G3P) to form lysophosphatidic acid (LPA). This enzyme utilizes acyl-phosphate as fatty acyl donor, but not acyl-CoA or acyl-ACP. This Anaeromyxobacter dehalogenans (strain 2CP-C) protein is Glycerol-3-phosphate acyltransferase.